A 337-amino-acid polypeptide reads, in one-letter code: Large ribosomal subunit protein uL3 (337 aa).

This sequence belongs to the universal ribosomal protein uL3 family. Part of the 50S ribosomal subunit. Forms a cluster with proteins L14 and L24e.

One of the primary rRNA binding proteins, it binds directly near the 3'-end of the 23S rRNA, where it nucleates assembly of the 50S subunit. The chain is Large ribosomal subunit protein uL3 from Methanosphaerula palustris (strain ATCC BAA-1556 / DSM 19958 / E1-9c).